Consider the following 432-residue polypeptide: Serine--tRNA ligase (432 aa).

L-serine is bound at residue 230–232 (TAE). 261–263 (RSE) lines the ATP pocket. Residue Glu284 participates in L-serine binding. 348 to 351 (EVSS) provides a ligand contact to ATP. Ser383 is a binding site for L-serine.

Belongs to the class-II aminoacyl-tRNA synthetase family. Type-1 seryl-tRNA synthetase subfamily. As to quaternary structure, homodimer. The tRNA molecule binds across the dimer.

It is found in the cytoplasm. The enzyme catalyses tRNA(Ser) + L-serine + ATP = L-seryl-tRNA(Ser) + AMP + diphosphate + H(+). It catalyses the reaction tRNA(Sec) + L-serine + ATP = L-seryl-tRNA(Sec) + AMP + diphosphate + H(+). It functions in the pathway aminoacyl-tRNA biosynthesis; selenocysteinyl-tRNA(Sec) biosynthesis; L-seryl-tRNA(Sec) from L-serine and tRNA(Sec): step 1/1. Its function is as follows. Catalyzes the attachment of serine to tRNA(Ser). Is also able to aminoacylate tRNA(Sec) with serine, to form the misacylated tRNA L-seryl-tRNA(Sec), which will be further converted into selenocysteinyl-tRNA(Sec). This is Serine--tRNA ligase from Limosilactobacillus fermentum (strain NBRC 3956 / LMG 18251) (Lactobacillus fermentum).